Reading from the N-terminus, the 57-residue chain is Large ribosomal subunit protein eL20 (57 aa).

It belongs to the eukaryotic ribosomal protein eL20 family. Part of the 50S ribosomal subunit. Binds 23S rRNA.

The protein is Large ribosomal subunit protein eL20 of Archaeoglobus fulgidus (strain ATCC 49558 / DSM 4304 / JCM 9628 / NBRC 100126 / VC-16).